We begin with the raw amino-acid sequence, 418 residues long: MTIAEQVATIAKNARQASIALARLSTTVKNEMLLKMADALEAGTTGLMCENAKDLAAGKEKGLSDAMLDRLMLDAKRIKGMADALREVASLADPVGEVTRMWKRPNGLMVGKMRIPLGVIGIVYESRPNVTADAAALCLKSGNAVVLRGGSEAIHSNRAIAATLQGVMKELGIPEAALSLIPFTEREGVLEMLKQEELIDLIIPRGGESLIRFVVENSRIPVIKHYKGVCHLFVDASADFEMATRIIINAKTQRPGVCNALETLLIHKDVAATFIPPFAKSLGELQVELRGDEEFRKYAPAAKVATEEDWAAEYLELILACKVVDDMDAAIDHINQYGSLHSEVIVTRDYANAQRFIREVNSSCVLVNASTRFNDGGQLGLGAEIGISTTKLHSFGPMGLEDLTTTKFIVYGDGQVRA.

Belongs to the gamma-glutamyl phosphate reductase family.

The protein localises to the cytoplasm. The enzyme catalyses L-glutamate 5-semialdehyde + phosphate + NADP(+) = L-glutamyl 5-phosphate + NADPH + H(+). It functions in the pathway amino-acid biosynthesis; L-proline biosynthesis; L-glutamate 5-semialdehyde from L-glutamate: step 2/2. Its function is as follows. Catalyzes the NADPH-dependent reduction of L-glutamate 5-phosphate into L-glutamate 5-semialdehyde and phosphate. The product spontaneously undergoes cyclization to form 1-pyrroline-5-carboxylate. The polypeptide is Gamma-glutamyl phosphate reductase (Trichlorobacter lovleyi (strain ATCC BAA-1151 / DSM 17278 / SZ) (Geobacter lovleyi)).